The chain runs to 186 residues: Ribosome-recycling factor (186 aa).

It belongs to the RRF family.

The protein resides in the cytoplasm. Responsible for the release of ribosomes from messenger RNA at the termination of protein biosynthesis. May increase the efficiency of translation by recycling ribosomes from one round of translation to another. The sequence is that of Ribosome-recycling factor from Brucella abortus (strain S19).